A 303-amino-acid polypeptide reads, in one-letter code: 5-dehydro-4-deoxyglucarate dehydratase (303 aa).

The protein belongs to the DapA family.

The enzyme catalyses 5-dehydro-4-deoxy-D-glucarate + H(+) = 2,5-dioxopentanoate + CO2 + H2O. The protein operates within carbohydrate acid metabolism; D-glucarate degradation; 2,5-dioxopentanoate from D-glucarate: step 2/2. The sequence is that of 5-dehydro-4-deoxyglucarate dehydratase from Pseudomonas putida (Arthrobacter siderocapsulatus).